Consider the following 191-residue polypeptide: Lipid A acyltransferase PagP (191 aa).

Positions 1-26 (MLKVNKYVILIIAFVSQMMFSTTAQA) are cleaved as a signal peptide. Catalysis depends on residues H63, D106, and S107.

It belongs to the lipid A palmitoyltransferase family. In terms of assembly, homodimer.

The protein localises to the cell outer membrane. The catalysed reaction is a lipid A + a 1,2-diacyl-sn-glycero-3-phosphocholine = a hepta-acyl lipid A + a 2-acyl-sn-glycero-3-phosphocholine. It catalyses the reaction a lipid IVA + a 1,2-diacyl-sn-glycero-3-phosphocholine = a lipid IVB + a 2-acyl-sn-glycero-3-phosphocholine. It carries out the reaction a lipid IIA + a 1,2-diacyl-sn-glycero-3-phosphocholine = a lipid IIB + a 2-acyl-sn-glycero-3-phosphocholine. Functionally, transfers a fatty acid residue from the sn-1 position of a phospholipid to the N-linked hydroxyfatty acid chain on the proximal unit of lipid A or its precursors. In Enterobacter lignolyticus (strain SCF1), this protein is Lipid A acyltransferase PagP.